Consider the following 397-residue polypeptide: LIM/homeobox protein Lhx9 (397 aa).

2 consecutive LIM zinc-binding domains span residues 69 to 130 (ALCA…RFSV) and 131 to 193 (QRCA…LLQG). Disordered regions lie at residues 248–272 (ENEADHLDRDQQPYPPSQKTKRMRT), 330–364 (ENGGVDKADGTSLPAPPSADSGALTPPGTATTLTD), and 378–397 (SNMDSHESGSPSQTTLTNLF). A DNA-binding region (homeobox) is located at residues 267 to 326 (TKRMRTSFKHHQLRTMKSYFAINHNPDAKDLKQLAQKTGLTKRVLQVWFQNARAKFRRNL). Positions 353-364 (LTPPGTATTLTD) are enriched in low complexity.

In terms of assembly, interacts with LDB1 and LDB2.

The protein resides in the nucleus. Its function is as follows. Involved in gonadal development. This is LIM/homeobox protein Lhx9 (LHX9) from Homo sapiens (Human).